A 610-amino-acid polypeptide reads, in one-letter code: Elongation factor 4 (610 aa).

Residues 11–193 form the tr-type G domain; the sequence is ENIRNFSIIA…QIVEKVPAPS (183 aa). GTP is bound by residues 23 to 28 and 140 to 143; these read DHGKST and NKID.

The protein belongs to the TRAFAC class translation factor GTPase superfamily. Classic translation factor GTPase family. LepA subfamily.

The protein resides in the cell membrane. It catalyses the reaction GTP + H2O = GDP + phosphate + H(+). Functionally, required for accurate and efficient protein synthesis under certain stress conditions. May act as a fidelity factor of the translation reaction, by catalyzing a one-codon backward translocation of tRNAs on improperly translocated ribosomes. Back-translocation proceeds from a post-translocation (POST) complex to a pre-translocation (PRE) complex, thus giving elongation factor G a second chance to translocate the tRNAs correctly. Binds to ribosomes in a GTP-dependent manner. The protein is Elongation factor 4 of Streptococcus equi subsp. equi (strain 4047).